Reading from the N-terminus, the 188-residue chain is Elongation factor P (188 aa).

Belongs to the elongation factor P family.

The protein resides in the cytoplasm. It participates in protein biosynthesis; polypeptide chain elongation. Its function is as follows. Involved in peptide bond synthesis. Stimulates efficient translation and peptide-bond synthesis on native or reconstituted 70S ribosomes in vitro. Probably functions indirectly by altering the affinity of the ribosome for aminoacyl-tRNA, thus increasing their reactivity as acceptors for peptidyl transferase. In Bifidobacterium longum (strain DJO10A), this protein is Elongation factor P.